The primary structure comprises 314 residues: 4-hydroxy-3-methylbut-2-enyl diphosphate reductase (314 aa).

C12 contacts [4Fe-4S] cluster. Residues H43 and H81 each coordinate (2E)-4-hydroxy-3-methylbut-2-enyl diphosphate. The dimethylallyl diphosphate site is built by H43 and H81. Isopentenyl diphosphate is bound by residues H43 and H81. Residue C103 coordinates [4Fe-4S] cluster. H131 contacts (2E)-4-hydroxy-3-methylbut-2-enyl diphosphate. H131 is a dimethylallyl diphosphate binding site. H131 is a binding site for isopentenyl diphosphate. Residue E133 is the Proton donor of the active site. A (2E)-4-hydroxy-3-methylbut-2-enyl diphosphate-binding site is contributed by T170. C198 is a [4Fe-4S] cluster binding site. (2E)-4-hydroxy-3-methylbut-2-enyl diphosphate is bound by residues S226, N228, and S271. Positions 226, 228, and 271 each coordinate dimethylallyl diphosphate. Residues S226, N228, and S271 each coordinate isopentenyl diphosphate.

Belongs to the IspH family. [4Fe-4S] cluster is required as a cofactor.

The catalysed reaction is isopentenyl diphosphate + 2 oxidized [2Fe-2S]-[ferredoxin] + H2O = (2E)-4-hydroxy-3-methylbut-2-enyl diphosphate + 2 reduced [2Fe-2S]-[ferredoxin] + 2 H(+). The enzyme catalyses dimethylallyl diphosphate + 2 oxidized [2Fe-2S]-[ferredoxin] + H2O = (2E)-4-hydroxy-3-methylbut-2-enyl diphosphate + 2 reduced [2Fe-2S]-[ferredoxin] + 2 H(+). The protein operates within isoprenoid biosynthesis; dimethylallyl diphosphate biosynthesis; dimethylallyl diphosphate from (2E)-4-hydroxy-3-methylbutenyl diphosphate: step 1/1. Its pathway is isoprenoid biosynthesis; isopentenyl diphosphate biosynthesis via DXP pathway; isopentenyl diphosphate from 1-deoxy-D-xylulose 5-phosphate: step 6/6. Functionally, catalyzes the conversion of 1-hydroxy-2-methyl-2-(E)-butenyl 4-diphosphate (HMBPP) into a mixture of isopentenyl diphosphate (IPP) and dimethylallyl diphosphate (DMAPP). Acts in the terminal step of the DOXP/MEP pathway for isoprenoid precursor biosynthesis. The polypeptide is 4-hydroxy-3-methylbut-2-enyl diphosphate reductase (Bacillus licheniformis (strain ATCC 14580 / DSM 13 / JCM 2505 / CCUG 7422 / NBRC 12200 / NCIMB 9375 / NCTC 10341 / NRRL NRS-1264 / Gibson 46)).